We begin with the raw amino-acid sequence, 121 residues long: Ribonuclease P protein component (121 aa).

It belongs to the RnpA family. Consists of a catalytic RNA component (M1 or rnpB) and a protein subunit.

It catalyses the reaction Endonucleolytic cleavage of RNA, removing 5'-extranucleotides from tRNA precursor.. Functionally, RNaseP catalyzes the removal of the 5'-leader sequence from pre-tRNA to produce the mature 5'-terminus. It can also cleave other RNA substrates such as 4.5S RNA. The protein component plays an auxiliary but essential role in vivo by binding to the 5'-leader sequence and broadening the substrate specificity of the ribozyme. The protein is Ribonuclease P protein component of Neisseria meningitidis serogroup A / serotype 4A (strain DSM 15465 / Z2491).